The chain runs to 541 residues: Developmental and secondary metabolism regulator VEL1 (541 aa).

Positions 26–220 constitute a Velvet domain; sequence NRHLWYQLTV…ADQGCRVRIR (195 aa). Positions 40-45 match the Nuclear localization signal motif; sequence ERARAC. Disordered stretches follow at residues 222-447 and 464-483; these read DVRM…MPTQ and PIEA…TGGK. Residues 230–244 are compositionally biased toward basic and acidic residues; it reads GKGSGYDRREEEYAR. The span at 289 to 298 shows a compositional bias: low complexity; the sequence is APSLPHAPSL. Composition is skewed to pro residues over residues 299 to 314, 345 to 355, and 425 to 439; these read PHAP…PPAA, APIPPVTPTGP, and SPAP…PAPS. The PEST stretch occupies residues 444-472; sequence MPTQSSLAPLKIASLVSPLPPIEAQTEPL.

This sequence belongs to the velvet family. VeA subfamily. In terms of assembly, component of the heterotrimeric velvet complex composed of LAE1, VEL1 and VEL2; VEL1 acting as a bridging protein between LAE1 and VEL2.

Its subcellular location is the nucleus. It localises to the cytoplasm. Functionally, component of the velvet transcription factor complex that controls sexual/asexual developmental ratio in response to light, promoting sexual development in the darkness while stimulating asexual sporulation under illumination. The velvet complex acts as a global regulator for secondary metabolite gene expression. Controls the expression of the gliotoxin gene cluster. Plays a key role in mycoparasitism. The protein is Developmental and secondary metabolism regulator VEL1 of Hypocrea virens (strain Gv29-8 / FGSC 10586) (Gliocladium virens).